A 561-amino-acid polypeptide reads, in one-letter code: MMQGEVSPSPSLIDRTIRMRKETESRKVVLAWGLLNVSMAGMIYTEMTGKLISTYYNVTYWPLWYIELALASLFSLNALFDFWRYFKYTVAPTSLVVSPGQQTLLGLKPAVVQTTPPRDLAATQISPSPPSPSIQGQSVLSYSPSRSPSTSPKFATSCMTGYSPQLQGLSSGGLGSYSPAVTYSPVSGYSKLASFSLSPSSPYPTTVGPVESSGLRARYRSPPTAYNSPTDKEDYMTDLRTLDTFLRSEEEKQHRVKLGSPDSTSPSTSPTFWNYSRSVGDYAQTLKKFQYQLACRSQAPCANKDEADLISKQAAEEVWARVTMNRQLLDHMDSWTAKFRNWISETILVPLVQEIESVSTQMRRMGCPELQIGEASVTSLKQAALVKAPLIPTLNAIVQYLDLTPNQEYLFERIKELSQGGCMSSFRWNRGGDFKGRRWDTDLPTDSAIIMHVFCTYLDSRLPPHPKYPDGKTFTSQHFVQTPNKPDVTNENVFCVYQSAINPPHYELIYQRHVYSLPKGRNNMFHTLLMFLYIIKTKESGMLGRVNLGLSGVNILWIFGE.

A phosphoserine mark is found at S9 and S11. Residues 28–48 form a helical membrane-spanning segment; it reads VVLAWGLLNVSMAGMIYTEMT. N57 is a glycosylation site (N-linked (GlcNAc...) asparagine). The helical transmembrane segment at 60-80 threads the bilayer; the sequence is YWPLWYIELALASLFSLNALF. S98 is subject to Phosphoserine. Disordered stretches follow at residues 120–156 and 196–233; these read LAAT…KFAT and SLSP…TDKE. A compositionally biased stretch (low complexity) spans 138-152; that stretch reads SVLSYSPSRSPSTSP. Phosphoserine occurs at positions 201 and 248. A disordered region spans residues 250-270; the sequence is EEKQHRVKLGSPDSTSPSTSP. Low complexity predominate over residues 260 to 270; sequence SPDSTSPSTSP. N274 is a glycosylation site (N-linked (GlcNAc...) asparagine). Position 278 is a phosphoserine (S278).

In terms of assembly, interacts with NUP205.

It is found in the membrane. The protein resides in the nucleus envelope. The protein localises to the golgi apparatus. It localises to the cytoplasm. Its function is as follows. Nuclear envelope protein which in association with NUP205, may be involved in nuclear transport of various nuclear proteins in addition to MYC. In Rattus norvegicus (Rat), this protein is Transmembrane protein 209 (Tmem209).